The following is a 189-amino-acid chain: Autophagy receptor ATG45 (189 aa).

A binds glycogen region spans residues 1–96 (MSNFLLVIPE…TNNILHFKDN (96 aa)). The interval 97–189 (EASQLMDIPL…AKKVKTYWNK (93 aa)) is required for sequestration into autophagosomes. S107 is subject to Phosphoserine. The ATG8 interaction motif (AIM) motif lies at 127-130 (YVNL). Residue S172 is modified to Phosphoserine. The tract at residues 176–187 (LMCIAKKVKTYW) is may facilitate interactions with the autophagosome membrane.

As to quaternary structure, interacts with ATG8.

The protein localises to the cytoplasm. The protein resides in the cytosol. It is found in the cytoplasmic vesicle. Its subcellular location is the autophagosome. Autophagy receptor for glycogen that facilitates the sequestration of glycogen assemblies into autophagosomes as part of bulk autophagy; the autophagy of glycogen (glycophagy) is stimulated during prolonged nitrogen starvation and during sporulation. The polypeptide is Autophagy receptor ATG45 (Saccharomyces cerevisiae (strain ATCC 204508 / S288c) (Baker's yeast)).